The primary structure comprises 589 residues: Actin-histidine N-methyltransferase (589 aa).

The interval 1–22 (MGKKSRVKTQKSGTGATATVSP) is disordered. Polar residues predominate over residues 10 to 20 (QKSGTGATATV). Residues Arg-75, 104–106 (EGF), Arg-254, 275–279 (DMCNH), and 325–327 (SGF) contribute to the S-adenosyl-L-methionine site. The SET domain maps to 94–314 (EGFEMVNFKE…AGEQIYIFYG (221 aa)). The residue at position 513 (Ser-513) is a Phosphoserine. Positions 547–589 (LVNGERSFPNGTRSEEDLKQEERKRAKGDAKESSSDSTDAVKE) are disordered. Residues 559–589 (RSEEDLKQEERKRAKGDAKESSSDSTDAVKE) show a composition bias toward basic and acidic residues.

It belongs to the class V-like SAM-binding methyltransferase superfamily. SETD3 actin-histidine methyltransferase family. In terms of assembly, interacts with MYOD1. In terms of processing, phosphorylated by GSK3B, which is required for recognition by the SCF(FBXW7) complex and subsequent degradation. Post-translationally, ubiquitinated by the SCF(FBXW7) complex following phosphorylation by GSK3B, leading to its degradation by the proteasome.

It localises to the cytoplasm. The protein localises to the nucleus. It catalyses the reaction L-histidyl-[protein] + S-adenosyl-L-methionine = N(tele)-methyl-L-histidyl-[protein] + S-adenosyl-L-homocysteine + H(+). Protein-histidine N-methyltransferase that specifically mediates 3-methylhistidine (tele-methylhistidine) methylation of actin at 'His-73'. Histidine methylation of actin is required for smooth muscle contraction of the laboring uterus during delivery. Does not have protein-lysine N-methyltransferase activity and probably only catalyzes histidine methylation of actin. This Dasypus novemcinctus (Nine-banded armadillo) protein is Actin-histidine N-methyltransferase.